The following is a 205-amino-acid chain: Cryptic plasmid protein C (205 aa).

The tract at residues Thr142 to Phe205 is disordered. A compositionally biased stretch (polar residues) spans Gln155 to Ile174. Basic residues predominate over residues Gln189–Phe205.

In Neisseria gonorrhoeae, this protein is Cryptic plasmid protein C (cppC).